Consider the following 257-residue polypeptide: Imidazole glycerol phosphate synthase subunit HisF (257 aa).

Residues Asp12 and Asp131 contribute to the active site.

Belongs to the HisA/HisF family. Heterodimer of HisH and HisF.

It localises to the cytoplasm. It carries out the reaction 5-[(5-phospho-1-deoxy-D-ribulos-1-ylimino)methylamino]-1-(5-phospho-beta-D-ribosyl)imidazole-4-carboxamide + L-glutamine = D-erythro-1-(imidazol-4-yl)glycerol 3-phosphate + 5-amino-1-(5-phospho-beta-D-ribosyl)imidazole-4-carboxamide + L-glutamate + H(+). It participates in amino-acid biosynthesis; L-histidine biosynthesis; L-histidine from 5-phospho-alpha-D-ribose 1-diphosphate: step 5/9. IGPS catalyzes the conversion of PRFAR and glutamine to IGP, AICAR and glutamate. The HisF subunit catalyzes the cyclization activity that produces IGP and AICAR from PRFAR using the ammonia provided by the HisH subunit. The protein is Imidazole glycerol phosphate synthase subunit HisF of Burkholderia pseudomallei (strain 1106a).